A 143-amino-acid chain; its full sequence is Nucleoside diphosphate kinase (143 aa).

ATP contacts are provided by Lys-11, Phe-59, Arg-87, Thr-93, Arg-104, and Asn-114. His-117 functions as the Pros-phosphohistidine intermediate in the catalytic mechanism.

This sequence belongs to the NDK family. Homotetramer. The cofactor is Mg(2+).

The protein localises to the cytoplasm. It catalyses the reaction a 2'-deoxyribonucleoside 5'-diphosphate + ATP = a 2'-deoxyribonucleoside 5'-triphosphate + ADP. It carries out the reaction a ribonucleoside 5'-diphosphate + ATP = a ribonucleoside 5'-triphosphate + ADP. Its function is as follows. Major role in the synthesis of nucleoside triphosphates other than ATP. The ATP gamma phosphate is transferred to the NDP beta phosphate via a ping-pong mechanism, using a phosphorylated active-site intermediate. The protein is Nucleoside diphosphate kinase of Shewanella denitrificans (strain OS217 / ATCC BAA-1090 / DSM 15013).